Reading from the N-terminus, the 469-residue chain is Putative dipeptidase SAR1836 (469 aa).

His-84 is a binding site for Zn(2+). The active site involves Asp-86. Asp-115 is a Zn(2+) binding site. The active-site Proton acceptor is the Glu-149. Residues Glu-150, Asp-173, and His-440 each coordinate Zn(2+).

This sequence belongs to the peptidase M20A family. Zn(2+) serves as cofactor.

In Staphylococcus aureus (strain MRSA252), this protein is Putative dipeptidase SAR1836.